We begin with the raw amino-acid sequence, 790 residues long: Sorting nexin mvp1 (790 aa).

Composition is skewed to polar residues over residues 1–10 and 20–40; these read MSLFGSSPPN and KTAN…TRSG. Disordered regions lie at residues 1 to 62, 215 to 342, and 373 to 406; these read MSLF…RKQR, PNLS…SIHN, and AITG…HVRS. The segment covering 225 to 240 has biased composition (pro residues); that stretch reads PQRPVTPPKAPTPSPP. The span at 241 to 252 shows a compositional bias: low complexity; it reads KQQQQQQHQPPT. Over residues 269 to 283 the composition is skewed to basic and acidic residues; sequence DLHKGHNHGPLEHST. Polar residues predominate over residues 297–319; it reads NDLNGNDAVSYSTSPEVTTTSSA. Composition is skewed to low complexity over residues 324 to 339 and 386 to 400; these read TTST…GPSS and QSVS…PNRS. Residues 411–525 form the PX domain; that stretch reads EENILVTLMP…IMFLTVPTEL (115 aa). A 1,2-diacyl-sn-glycero-3-phospho-(1D-myo-inositol-3-phosphate) contacts are provided by Arg447, Ser449, Lys473, and Arg492.

It belongs to the sorting nexin family.

Its subcellular location is the cytoplasm. It localises to the membrane. Its function is as follows. Required for vacuolar protein sorting. The polypeptide is Sorting nexin mvp1 (vsp-1) (Neurospora crassa (strain ATCC 24698 / 74-OR23-1A / CBS 708.71 / DSM 1257 / FGSC 987)).